The chain runs to 202 residues: NAD(P)H dehydrogenase (quinone) 2 (202 aa).

One can recognise a Flavodoxin-like domain in the interval 4-190 (VLVLYYSSYG…AGAFHQGEIV (187 aa)). Residues 10-15 (SSYGHI) and 78-80 (TRF) contribute to the FMN site. Tyrosine 12 serves as a coordination point for NAD(+). Tryptophan 98 lines the substrate pocket. FMN-binding positions include 113 to 119 (STGTQHG) and histidine 134.

It belongs to the WrbA family. It depends on FMN as a cofactor.

It carries out the reaction a quinone + NADH + H(+) = a quinol + NAD(+). It catalyses the reaction a quinone + NADPH + H(+) = a quinol + NADP(+). This Rhizobium meliloti (strain 1021) (Ensifer meliloti) protein is NAD(P)H dehydrogenase (quinone) 2.